The following is a 436-amino-acid chain: Xylose isomerase (436 aa).

Active-site residues include histidine 100 and aspartate 103. Residues glutamate 231, glutamate 267, histidine 270, aspartate 295, aspartate 306, aspartate 308, and aspartate 338 each contribute to the Mg(2+) site.

Belongs to the xylose isomerase family. As to quaternary structure, homotetramer. The cofactor is Mg(2+).

It localises to the cytoplasm. The enzyme catalyses alpha-D-xylose = alpha-D-xylulofuranose. The polypeptide is Xylose isomerase (Rhizobium johnstonii (strain DSM 114642 / LMG 32736 / 3841) (Rhizobium leguminosarum bv. viciae)).